The sequence spans 422 residues: UDP-N-acetylglucosamine 1-carboxyvinyltransferase (422 aa).

22-23 is a phosphoenolpyruvate binding site; that stretch reads KN. A UDP-N-acetyl-alpha-D-glucosamine-binding site is contributed by R93. The Proton donor role is filled by C117. 2-(S-cysteinyl)pyruvic acid O-phosphothioketal is present on C117. UDP-N-acetyl-alpha-D-glucosamine contacts are provided by residues 122–126, 162–165, D307, and I329; these read RPVDL and KVSV.

This sequence belongs to the EPSP synthase family. MurA subfamily.

It is found in the cytoplasm. The enzyme catalyses phosphoenolpyruvate + UDP-N-acetyl-alpha-D-glucosamine = UDP-N-acetyl-3-O-(1-carboxyvinyl)-alpha-D-glucosamine + phosphate. The protein operates within cell wall biogenesis; peptidoglycan biosynthesis. In terms of biological role, cell wall formation. Adds enolpyruvyl to UDP-N-acetylglucosamine. The sequence is that of UDP-N-acetylglucosamine 1-carboxyvinyltransferase from Hamiltonella defensa subsp. Acyrthosiphon pisum (strain 5AT).